Consider the following 248-residue polypeptide: UPF0280 protein Maeo_0343 (248 aa).

The protein belongs to the UPF0280 family.

This is UPF0280 protein Maeo_0343 from Methanococcus aeolicus (strain ATCC BAA-1280 / DSM 17508 / OCM 812 / Nankai-3).